Here is a 406-residue protein sequence, read N- to C-terminus: Tryptophan synthase beta chain (406 aa).

Lys-99 is subject to N6-(pyridoxal phosphate)lysine.

This sequence belongs to the TrpB family. Tetramer of two alpha and two beta chains. Pyridoxal 5'-phosphate serves as cofactor.

The catalysed reaction is (1S,2R)-1-C-(indol-3-yl)glycerol 3-phosphate + L-serine = D-glyceraldehyde 3-phosphate + L-tryptophan + H2O. It functions in the pathway amino-acid biosynthesis; L-tryptophan biosynthesis; L-tryptophan from chorismate: step 5/5. Its function is as follows. The beta subunit is responsible for the synthesis of L-tryptophan from indole and L-serine. The sequence is that of Tryptophan synthase beta chain from Brucella anthropi (strain ATCC 49188 / DSM 6882 / CCUG 24695 / JCM 21032 / LMG 3331 / NBRC 15819 / NCTC 12168 / Alc 37) (Ochrobactrum anthropi).